A 262-amino-acid chain; its full sequence is Tropinone reductase homolog At2g30670 (262 aa).

13 to 37 (LVTGGASGIGHAIVEELAGLGARIY) provides a ligand contact to NADP(+). Serine 146 lines the substrate pocket. Catalysis depends on tyrosine 159, which acts as the Proton acceptor.

The protein belongs to the short-chain dehydrogenases/reductases (SDR) family. SDR65C subfamily.

The chain is Tropinone reductase homolog At2g30670 from Arabidopsis thaliana (Mouse-ear cress).